We begin with the raw amino-acid sequence, 292 residues long: tRNA-cytidine(32) 2-sulfurtransferase (292 aa).

A PP-loop motif motif is present at residues 54-59 (SGGKDS). The [4Fe-4S] cluster site is built by C129, C132, and C220.

The protein belongs to the TtcA family. As to quaternary structure, homodimer. It depends on Mg(2+) as a cofactor. Requires [4Fe-4S] cluster as cofactor.

The protein resides in the cytoplasm. The catalysed reaction is cytidine(32) in tRNA + S-sulfanyl-L-cysteinyl-[cysteine desulfurase] + AH2 + ATP = 2-thiocytidine(32) in tRNA + L-cysteinyl-[cysteine desulfurase] + A + AMP + diphosphate + H(+). The protein operates within tRNA modification. Catalyzes the ATP-dependent 2-thiolation of cytidine in position 32 of tRNA, to form 2-thiocytidine (s(2)C32). The sulfur atoms are provided by the cysteine/cysteine desulfurase (IscS) system. In Cereibacter sphaeroides (strain ATCC 17025 / ATH 2.4.3) (Rhodobacter sphaeroides), this protein is tRNA-cytidine(32) 2-sulfurtransferase.